The sequence spans 633 residues: UvrABC system protein C (633 aa).

Residues 21–100 form the GIY-YIG domain; sequence TDPGVYKFLD…IKELQPRYNV (80 aa). In terms of domain architecture, UVR spans 214–249; sequence QELMDLLKDEMQRQSDAHNFEEAARLRDQVKALKDY.

The protein belongs to the UvrC family. As to quaternary structure, interacts with UvrB in an incision complex.

Its subcellular location is the cytoplasm. Its function is as follows. The UvrABC repair system catalyzes the recognition and processing of DNA lesions. UvrC both incises the 5' and 3' sides of the lesion. The N-terminal half is responsible for the 3' incision and the C-terminal half is responsible for the 5' incision. The chain is UvrABC system protein C from Salinibacter ruber (strain DSM 13855 / M31).